The sequence spans 276 residues: Tryptophan synthase alpha chain (276 aa).

Residues E49 and D60 each act as proton acceptor in the active site.

Belongs to the TrpA family. As to quaternary structure, tetramer of two alpha and two beta chains.

It carries out the reaction (1S,2R)-1-C-(indol-3-yl)glycerol 3-phosphate + L-serine = D-glyceraldehyde 3-phosphate + L-tryptophan + H2O. The protein operates within amino-acid biosynthesis; L-tryptophan biosynthesis; L-tryptophan from chorismate: step 5/5. Its function is as follows. The alpha subunit is responsible for the aldol cleavage of indoleglycerol phosphate to indole and glyceraldehyde 3-phosphate. The sequence is that of Tryptophan synthase alpha chain from Acidiphilium cryptum (strain JF-5).